The sequence spans 353 residues: UPF0283 membrane protein YcjF (353 aa).

3 helical membrane passes run 70-90, 100-120, and 213-233; these read MVMGGLALFGASVVGQGVQWT, VALGGCAAGALIIGAGVGSVV, and ESTLMIAVSPLALVDMAFIAW.

The protein belongs to the UPF0283 family.

It localises to the cell inner membrane. The chain is UPF0283 membrane protein YcjF from Escherichia coli O127:H6 (strain E2348/69 / EPEC).